A 700-amino-acid polypeptide reads, in one-letter code: Chondroitinase-AC (700 aa).

The N-terminal stretch at 1-22 (MKKLFVTCIVFFSILSPALLIA) is a signal peptide. Catalysis depends on residues His-225, Tyr-234, and Arg-288. The O-linked (Man...) serine glycan is linked to Ser-328. Glu-405, Asp-407, Asp-416, and Tyr-417 together coordinate Ca(2+). The O-linked (Man...) serine glycan is linked to Ser-455.

This sequence belongs to the polysaccharide lyase 8 family. In terms of assembly, monomer. Requires Ca(2+) as cofactor.

The catalysed reaction is Eliminative degradation of polysaccharides containing 1,4-beta-D-hexosaminyl and 1,3-beta-D-glucuronosyl linkages to disaccharides containing 4-deoxy-beta-D-gluc-4-enuronosyl groups.. The protein is Chondroitinase-AC (cslA) of Pedobacter heparinus (strain ATCC 13125 / DSM 2366 / CIP 104194 / JCM 7457 / NBRC 12017 / NCIMB 9290 / NRRL B-14731 / HIM 762-3).